The primary structure comprises 492 residues: uncharacterized protein (492 aa).

A run of 13 helical transmembrane segments spans residues 67 to 87, 88 to 108, 110 to 130, 157 to 177, 185 to 205, 232 to 252, 255 to 275, 294 to 314, 333 to 353, 367 to 387, 392 to 412, 434 to 454, and 464 to 484; these read VAIMSIYGSLVYMSTIIGGWL, ADRVFGTANTVFYGGIFIMFG, IALAYPGSSIAFYISMVLIIV, GFSIFYMGINLGGLLAPLIVG, YHLGFGAAAVGMLLGLIVFAL, IGVIIVAIAVIISVQTGVLTI, FIDLVSILGILIPVIYFIIMF, LFIGAVMFWAIQEQGATILAV, WFQSLNPLFVVIFAPIFAWLW, FSIGIILAGLSFIIMVFPAMQ, LVSPLWLVLSFLLVVLGELCL, SMWFLTNAAAQAINAQVAGLF, and GTIGLISIVLGGILLLLSPVI.

The protein belongs to the major facilitator superfamily. Proton-dependent oligopeptide transporter (POT/PTR) (TC 2.A.17) family.

The protein resides in the cell membrane. This is an uncharacterized protein from Bacillus subtilis (strain 168).